The chain runs to 301 residues: Protoheme IX farnesyltransferase (301 aa).

The next 8 membrane-spanning stretches (helical) occupy residues 25–45 (VTQLAVFCAVIGMFLSTPGMV), 47–67 (WTPLIGGTVGIWLLAGAAFAI), 97–117 (ILLFSAVLGGLGMWTLYTFAN), 119–139 (LTMWLTLATFVGYAVIYTLLL), 147–167 (IVIGGASGAMPPALGWAAVTG), 173–193 (AWILVLIIFVWTPPHFWALAL), 235–255 (FISGMSGVVYLAAAVLLGALF), and 279–299 (IVYLSLLFAALLIDHYARVLI).

It belongs to the UbiA prenyltransferase family. Protoheme IX farnesyltransferase subfamily.

It localises to the cell inner membrane. The enzyme catalyses heme b + (2E,6E)-farnesyl diphosphate + H2O = Fe(II)-heme o + diphosphate. It functions in the pathway porphyrin-containing compound metabolism; heme O biosynthesis; heme O from protoheme: step 1/1. In terms of biological role, converts heme B (protoheme IX) to heme O by substitution of the vinyl group on carbon 2 of heme B porphyrin ring with a hydroxyethyl farnesyl side group. This chain is Protoheme IX farnesyltransferase, found in Paraburkholderia xenovorans (strain LB400).